We begin with the raw amino-acid sequence, 600 residues long: Chaperonin 60 subunit beta 1, chloroplastic (600 aa).

Residues 1-12 (MASTFTATSSIG) show a composition bias toward polar residues. The disordered stretch occupies residues 1 to 23 (MASTFTATSSIGSMVAPNGHKSD). The N-terminal 54 residues, 1-54 (MASTFTATSSIGSMVAPNGHKSDKKLISKLSSSSFGRRQSVCPRPRRSSSAIVC), are a transit peptide targeting the chloroplast. A phosphoserine mark is found at Ser-101 and Ser-478.

This sequence belongs to the chaperonin (HSP60) family. In terms of assembly, part of the Cpn60 complex composed of 7 alpha and 7 beta subunits. Can also form a complex composed of 14 beta subunits only. Both complexes show ATPase activity. The Cpn60 complex interacts with the Cpn10 complex. Interacts with RAB during heat stress. In terms of tissue distribution, expressed in leaves, stems, petioles and flowers.

It localises to the plastid. Its subcellular location is the chloroplast stroma. Functionally, binds RuBisCO small and large subunits and is implicated in the assembly of the enzyme oligomer. Involved in protein assisted folding. Required for proper plastid division. In Arabidopsis thaliana (Mouse-ear cress), this protein is Chaperonin 60 subunit beta 1, chloroplastic (CPN60B1).